We begin with the raw amino-acid sequence, 2378 residues long: Serine/threonine-protein kinase ATM (2378 aa).

The FAT domain maps to 1415–1937 (LSARKRNTMM…LHTILMYDDE (523 aa)). Positions 2044 to 2366 (WKDVFTIADG…LLREATSADN (323 aa)) constitute a PI3K/PI4K catalytic domain. The tract at residues 2050-2056 (IADGIST) is G-loop. Residues 2218–2226 (GLGDRHASN) form a catalytic loop region. Residues 2238–2263 (HIDLGMILEYSKRTLPVPEQVPFRIT) form an activation loop region. Positions 2346–2378 (TAQSSNLQIRRLLREATSADNLSRMFCGWMPFL) constitute an FATC domain.

The protein belongs to the PI3/PI4-kinase family. ATM subfamily.

The protein resides in the nucleus. The catalysed reaction is L-seryl-[protein] + ATP = O-phospho-L-seryl-[protein] + ADP + H(+). It carries out the reaction L-threonyl-[protein] + ATP = O-phospho-L-threonyl-[protein] + ADP + H(+). In terms of biological role, serine/threonine protein kinase which activates checkpoint signaling in the presence of DNA double strand breaks (DSBs) and other forms of DNA damage induced by ionizing radiation and other genotoxic stresses such as UV. Plays a role in maintaining genome stability. The sequence is that of Serine/threonine-protein kinase ATM (atm-1) from Caenorhabditis elegans.